The chain runs to 211 residues: Urease accessory protein UreF (211 aa).

Residues 71 to 93 (DDADRETDARTPAPAARHASRSQ) are disordered.

It belongs to the UreF family. As to quaternary structure, ureD, UreF and UreG form a complex that acts as a GTP-hydrolysis-dependent molecular chaperone, activating the urease apoprotein by helping to assemble the nickel containing metallocenter of UreC. The UreE protein probably delivers the nickel.

It is found in the cytoplasm. In terms of biological role, required for maturation of urease via the functional incorporation of the urease nickel metallocenter. The sequence is that of Urease accessory protein UreF from Mycobacterium bovis (strain ATCC BAA-935 / AF2122/97).